Consider the following 279-residue polypeptide: Sarcosine/dimethylglycine N-methyltransferase (279 aa).

The protein belongs to the methyltransferase superfamily. As to quaternary structure, monomer.

The catalysed reaction is sarcosine + 2 S-adenosyl-L-methionine = glycine betaine + 2 S-adenosyl-L-homocysteine + 2 H(+). It catalyses the reaction sarcosine + S-adenosyl-L-methionine = N,N-dimethylglycine + S-adenosyl-L-homocysteine + H(+). The enzyme catalyses N,N-dimethylglycine + S-adenosyl-L-methionine = glycine betaine + S-adenosyl-L-homocysteine + H(+). It functions in the pathway amine and polyamine biosynthesis; betaine biosynthesis via glycine pathway; betaine from glycine: step 2/3. It participates in amine and polyamine biosynthesis; betaine biosynthesis via glycine pathway; betaine from glycine: step 3/3. P-chloromercuribenzoate acid inhibits 23% of the SDMT activities on sarcosine and dimethylglycine, and S-adenosylhomocysteine (AdoHcy) inhibits completely GSMT activities. In terms of biological role, catalyzes the methylation of sarcosine and dimethylglycine to dimethylglycine and betaine, respectively, with S-adenosylmethionine (AdoMet) acting as the methyl donor. It has strict specificity for sarcosine and dimethylglycine as the methyl group acceptors. In Halorhodospira halochloris (Ectothiorhodospira halochloris), this protein is Sarcosine/dimethylglycine N-methyltransferase.